Here is a 127-residue protein sequence, read N- to C-terminus: KP4 killer toxin (127 aa).

The signal sequence occupies residues 1–22 (MQIINVVYSFLFAAAMLPVVHS). 5 disulfides stabilise this stretch: Cys27-Cys100, Cys33-Cys103, Cys49-Cys89, Cys57-Cys82, and Cys66-Cys127.

As to quaternary structure, monomer.

Its subcellular location is the secreted. This protein is lethal to sensitive cells of the same or related species. It specifically inhibits voltage-gated calcium channels. It inhibits cell growth and division by blocking calcium import. In Mycosarcoma maydis (Corn smut fungus), this protein is KP4 killer toxin (M2A).